Reading from the N-terminus, the 134-residue chain is Fluoride-specific ion channel FluC (134 aa).

Transmembrane regions (helical) follow at residues 7-27 (LAVA…TIMA), 38-58 (GTLL…IVLV), 69-89 (LFLF…AAES), and 110-130 (VGSL…LLGH). Residues G77 and T80 each coordinate Na(+).

The protein belongs to the fluoride channel Fluc/FEX (TC 1.A.43) family.

It is found in the cell inner membrane. It catalyses the reaction fluoride(in) = fluoride(out). Na(+) is not transported, but it plays an essential structural role and its presence is essential for fluoride channel function. Fluoride-specific ion channel. Important for reducing fluoride concentration in the cell, thus reducing its toxicity. The chain is Fluoride-specific ion channel FluC from Legionella pneumophila subsp. pneumophila (strain Philadelphia 1 / ATCC 33152 / DSM 7513).